The primary structure comprises 208 residues: Phosphoheptose isomerase (208 aa).

One can recognise an SIS domain in the interval 38–200 (MALTLARGRK…LFENVLALQP (163 aa)). Position 53 to 55 (53 to 55 (NGG)) interacts with substrate. H62 and E66 together coordinate Zn(2+). Residues E66, 95 to 96 (ND), 121 to 123 (STS), S126, and Q173 contribute to the substrate site. Zn(2+)-binding residues include Q173 and H181.

The protein belongs to the SIS family. GmhA subfamily. Homotetramer. The cofactor is Zn(2+).

The protein localises to the cytoplasm. The enzyme catalyses 2 D-sedoheptulose 7-phosphate = D-glycero-alpha-D-manno-heptose 7-phosphate + D-glycero-beta-D-manno-heptose 7-phosphate. Its pathway is carbohydrate biosynthesis; D-glycero-D-manno-heptose 7-phosphate biosynthesis; D-glycero-alpha-D-manno-heptose 7-phosphate and D-glycero-beta-D-manno-heptose 7-phosphate from sedoheptulose 7-phosphate: step 1/1. Catalyzes the isomerization of sedoheptulose 7-phosphate in D-glycero-D-manno-heptose 7-phosphate. This Nitratidesulfovibrio vulgaris (strain DSM 19637 / Miyazaki F) (Desulfovibrio vulgaris) protein is Phosphoheptose isomerase.